The following is a 471-amino-acid chain: ATP synthase subunit beta (471 aa).

Residue 159–166 (GGAGVGKT) coordinates ATP.

Belongs to the ATPase alpha/beta chains family. In terms of assembly, F-type ATPases have 2 components, CF(1) - the catalytic core - and CF(0) - the membrane proton channel. CF(1) has five subunits: alpha(3), beta(3), gamma(1), delta(1), epsilon(1). CF(0) has four main subunits: a(1), b(1), b'(1) and c(9-12).

It localises to the cell membrane. The catalysed reaction is ATP + H2O + 4 H(+)(in) = ADP + phosphate + 5 H(+)(out). Its function is as follows. Produces ATP from ADP in the presence of a proton gradient across the membrane. The catalytic sites are hosted primarily by the beta subunits. In Heliobacterium modesticaldum (strain ATCC 51547 / Ice1), this protein is ATP synthase subunit beta.